A 415-amino-acid chain; its full sequence is L-cysteine:1D-myo-inositol 2-amino-2-deoxy-alpha-D-glucopyranoside ligase (415 aa).

The disordered stretch occupies residues 1-20; it reads MQSWSETAVPSVPGQGPPLR. Cys43 provides a ligand contact to Zn(2+). Residues 43-46, Thr58, and 81-83 each bind L-cysteinyl-5'-AMP; these read CGIT and NVT. Positions 45–55 match the 'HIGH' region motif; the sequence is ITPYDATHLGH. The short motif at 187-192 is the 'ERGGDP' region element; the sequence is ERGGDP. Residue Trp227 participates in L-cysteinyl-5'-AMP binding. Cys231 provides a ligand contact to Zn(2+). Residue 249–251 coordinates L-cysteinyl-5'-AMP; sequence GSD. His256 is a binding site for Zn(2+). Ile283 provides a ligand contact to L-cysteinyl-5'-AMP. The short motif at 289–293 is the 'KMSKS' region element; it reads KMSKS.

The protein belongs to the class-I aminoacyl-tRNA synthetase family. MshC subfamily. In terms of assembly, monomer. It depends on Zn(2+) as a cofactor.

It catalyses the reaction 1D-myo-inositol 2-amino-2-deoxy-alpha-D-glucopyranoside + L-cysteine + ATP = 1D-myo-inositol 2-(L-cysteinylamino)-2-deoxy-alpha-D-glucopyranoside + AMP + diphosphate + H(+). Catalyzes the ATP-dependent condensation of GlcN-Ins and L-cysteine to form L-Cys-GlcN-Ins. The sequence is that of L-cysteine:1D-myo-inositol 2-amino-2-deoxy-alpha-D-glucopyranoside ligase from Rhodococcus jostii (strain RHA1).